A 434-amino-acid chain; its full sequence is Nicotinate phosphoribosyltransferase (434 aa).

His-242 bears the Phosphohistidine; by autocatalysis mark.

Belongs to the NAPRTase family. Post-translationally, transiently phosphorylated on a His residue during the reaction cycle. Phosphorylation strongly increases the affinity for substrates and increases the rate of nicotinate D-ribonucleotide production. Dephosphorylation regenerates the low-affinity form of the enzyme, leading to product release.

It catalyses the reaction nicotinate + 5-phospho-alpha-D-ribose 1-diphosphate + ATP + H2O = nicotinate beta-D-ribonucleotide + ADP + phosphate + diphosphate. Its pathway is cofactor biosynthesis; NAD(+) biosynthesis; nicotinate D-ribonucleotide from nicotinate: step 1/1. Catalyzes the synthesis of beta-nicotinate D-ribonucleotide from nicotinate and 5-phospho-D-ribose 1-phosphate at the expense of ATP. In Agrobacterium fabrum (strain C58 / ATCC 33970) (Agrobacterium tumefaciens (strain C58)), this protein is Nicotinate phosphoribosyltransferase.